Reading from the N-terminus, the 305-residue chain is Hydrogen peroxide-inducible genes activator (305 aa).

The 58-residue stretch at M1–T58 folds into the HTH lysR-type domain. A DNA-binding region (H-T-H motif) is located at residues F18–R37. 2 disulfide bridges follow: C180–C259 and C199–C208. C199 is modified (cysteine sulfenic acid (-SOH); alternate). C199 is subject to S-glutathionyl cysteine; alternate. Residue C199 is modified to S-nitrosocysteine; alternate.

This sequence belongs to the LysR transcriptional regulatory family. Homodimer and homotetramer. Oxidized on Cys-199; the Cys-SOH formed in response to oxidative signaling triggers a conformational change and the onset of transcriptional activity with a specific DNA-binding affinity. Cys-199-SOH rapidly reacts with Cys-208-SH to form a disulfide bond. In terms of processing, S-nitrosylation in response to nitrosative signaling triggers a conformational change and the onset of transcriptional activity with a specific DNA-binding affinity. Post-translationally, glutathionylation in response to redox signaling triggers the onset of transcriptional activity with a specific DNA-binding affinity.

With respect to regulation, activated by oxidation of Cys-199 resulting in the alternative formation of cystine, sulfenic acid, S-nitroso- or glutathione-bound cysteine. Functionally, hydrogen peroxide sensor. Activates the expression of a regulon of hydrogen peroxide-inducible genes such as katG, gor, ahpC, ahpF, oxyS (a regulatory RNA), dps, fur and grxA. OxyR expression is negatively autoregulated by binding to a 43 bp region upstream of its own coding sequence. OxyR is inactivated by reduction of its essential disulfide bond by the product of GrxA, itself positively regulated by OxyR. Also has a positive regulatory effect on the production of surface proteins that control the colony morphology and auto-aggregation ability. In Escherichia coli O157:H7, this protein is Hydrogen peroxide-inducible genes activator (oxyR).